Consider the following 71-residue polypeptide: ATP synthase F(0) complex subunit e, mitochondrial (71 aa).

An N6-acetyllysine modification is found at Lys34. The residue at position 68 (Ser68) is a Phosphoserine.

The protein belongs to the ATPase e subunit family. Component of the ATP synthase complex composed at least of ATP5F1A/subunit alpha, ATP5F1B/subunit beta, ATP5MC1/subunit c (homooctomer), MT-ATP6/subunit a, MT-ATP8/subunit 8, ATP5ME/subunit e, ATP5MF/subunit f, ATP5MG/subunit g, ATP5MK/subunit k, ATP5MJ/subunit j, ATP5F1C/subunit gamma, ATP5F1D/subunit delta, ATP5F1E/subunit epsilon, ATP5PF/subunit F6, ATP5PB/subunit b, ATP5PD/subunit d, ATP5PO/subunit OSCP. ATP synthase complex consists of a soluble F(1) head domain (subunits alpha(3) and beta(3)) - the catalytic core - and a membrane F(0) domain - the membrane proton channel (subunits c, a, 8, e, f, g, k and j). These two domains are linked by a central stalk (subunits gamma, delta, and epsilon) rotating inside the F1 region and a stationary peripheral stalk (subunits F6, b, d, and OSCP). In terms of tissue distribution, mammary gland, liver, kidney, heart, spleen, brain and lung.

Its subcellular location is the mitochondrion. It is found in the mitochondrion inner membrane. Its function is as follows. Subunit e, of the mitochondrial membrane ATP synthase complex (F(1)F(0) ATP synthase or Complex V) that produces ATP from ADP in the presence of a proton gradient across the membrane which is generated by electron transport complexes of the respiratory chain. ATP synthase complex consist of a soluble F(1) head domain - the catalytic core - and a membrane F(1) domain - the membrane proton channel. These two domains are linked by a central stalk rotating inside the F(1) region and a stationary peripheral stalk. During catalysis, ATP synthesis in the catalytic domain of F(1) is coupled via a rotary mechanism of the central stalk subunits to proton translocation. In vivo, can only synthesize ATP although its ATP hydrolase activity can be activated artificially in vitro. Part of the complex F(0) domain. This Mus musculus (Mouse) protein is ATP synthase F(0) complex subunit e, mitochondrial.